The following is a 388-amino-acid chain: Succinate--CoA ligase [ADP-forming] subunit beta (388 aa).

The ATP-grasp domain maps to 9–244; it reads KQLFARYGLP…QSQEDPREAQ (236 aa). ATP is bound by residues Lys-46, 53–55, Glu-99, Thr-102, and Glu-107; that span reads GRG. Positions 199 and 213 each coordinate Mg(2+). Substrate is bound by residues Asn-264 and 321–323; that span reads GIV.

This sequence belongs to the succinate/malate CoA ligase beta subunit family. In terms of assembly, heterotetramer of two alpha and two beta subunits. It depends on Mg(2+) as a cofactor.

It catalyses the reaction succinate + ATP + CoA = succinyl-CoA + ADP + phosphate. The enzyme catalyses GTP + succinate + CoA = succinyl-CoA + GDP + phosphate. It participates in carbohydrate metabolism; tricarboxylic acid cycle; succinate from succinyl-CoA (ligase route): step 1/1. Its function is as follows. Succinyl-CoA synthetase functions in the citric acid cycle (TCA), coupling the hydrolysis of succinyl-CoA to the synthesis of either ATP or GTP and thus represents the only step of substrate-level phosphorylation in the TCA. The beta subunit provides nucleotide specificity of the enzyme and binds the substrate succinate, while the binding sites for coenzyme A and phosphate are found in the alpha subunit. The polypeptide is Succinate--CoA ligase [ADP-forming] subunit beta (Shigella boydii serotype 18 (strain CDC 3083-94 / BS512)).